The primary structure comprises 59 residues: Potassium channel toxin alpha-KTx 15.5 (59 aa).

Positions 1–22 (MKFSSIILLTLLICSMSIFGNC) are cleaved as a signal peptide. Glutamine 23 is subject to Pyrrolidone carboxylic acid. 3 disulfides stabilise this stretch: cysteine 30–cysteine 50, cysteine 35–cysteine 55, and cysteine 39–cysteine 57.

The protein belongs to the short scorpion toxin superfamily. Potassium channel inhibitor family. Alpha-KTx 15 subfamily. As to expression, expressed by the venom gland.

Its subcellular location is the secreted. Functionally, blocker of A-type voltage-gated potassium channels of cerebellar granular cells. May also inhibit Kv4/KCND when coexpressed with DPP6 or DPP10. The occlusion of the outer entry of the K(+) conducting pore is partially reversible and affects both open and closed channels. It shares the same target in rat brain than BmTX3 (AC Q8I0L5) and AmmTX3 (AC P60208). This Androctonus australis (Sahara scorpion) protein is Potassium channel toxin alpha-KTx 15.5.